The chain runs to 138 residues: Small ribosomal subunit protein uS11c (138 aa).

Residues 1 to 22 (MAKAIPKISSRRNGRIGSRKGA) are disordered. Positions 9-22 (SSRRNGRIGSRKGA) are enriched in basic residues.

It belongs to the universal ribosomal protein uS11 family. Part of the 30S ribosomal subunit.

The protein localises to the plastid. It localises to the chloroplast. The sequence is that of Small ribosomal subunit protein uS11c from Nicotiana tabacum (Common tobacco).